A 74-amino-acid chain; its full sequence is RNA-binding protein Hfq (74 aa).

Residues 9 to 69 form the Sm domain; sequence DQYLNQLRKN…ISTFSPVKNV (61 aa).

This sequence belongs to the Hfq family. As to quaternary structure, homohexamer.

In terms of biological role, RNA chaperone that binds small regulatory RNA (sRNAs) and mRNAs to facilitate mRNA translational regulation in response to envelope stress, environmental stress and changes in metabolite concentrations. Also binds with high specificity to tRNAs. This chain is RNA-binding protein Hfq, found in Oceanobacillus iheyensis (strain DSM 14371 / CIP 107618 / JCM 11309 / KCTC 3954 / HTE831).